The chain runs to 133 residues: Salmonella pathogenicity island 2 protein C (133 aa).

As to quaternary structure, interacts with the mammalian NIPSNAP3A and HOOK3 proteins in infected cells.

Its subcellular location is the secreted. The protein localises to the cytoplasm. Virulence protein that plays a central role in mammalian macrophage infection, by inhibiting phagosome-lysosome fusion and cellular trafficking, including trafficking of organelles that are devoid of Salmonella. May act by disrupting the function of the mammalian HOOK3 protein, a protein involved in the cellular traffic. Also required for actin ADP-ribosylase SpvB activity. This chain is Salmonella pathogenicity island 2 protein C (spiC), found in Salmonella typhimurium (strain 14028s / SGSC 2262).